A 170-amino-acid polypeptide reads, in one-letter code: Peptidyl-prolyl cis-trans isomerase-like 3 (170 aa).

A PPIase cyclophilin-type domain is found at 1–160 (MSVTLHTDLG…QEFRIKSVTI (160 aa)).

This sequence belongs to the cyclophilin-type PPIase family. PPIL3 subfamily.

It catalyses the reaction [protein]-peptidylproline (omega=180) = [protein]-peptidylproline (omega=0). In terms of biological role, PPIases accelerate the folding of proteins. It catalyzes the cis-trans isomerization of proline imidic peptide bonds in oligopeptides. This Rhizopus delemar (strain RA 99-880 / ATCC MYA-4621 / FGSC 9543 / NRRL 43880) (Mucormycosis agent) protein is Peptidyl-prolyl cis-trans isomerase-like 3 (cyp4).